The chain runs to 936 residues: Bifunctional uridylyltransferase/uridylyl-removing enzyme (936 aa).

A uridylyltransferase region spans residues 1–372; that stretch reads MTIPRIRQPR…SIATLLMRKR (372 aa). Residues 373–727 are uridylyl-removing; sequence NLGDFVLDGG…VLPDPERAVS (355 aa). Residues 488-610 form the HD domain; that stretch reads TDEHTIRAIG…VQSVERLHLL (123 aa). ACT domains follow at residues 728–809 and 840–915; these read EVLV…KALR and VIEI…TVPR. A compositionally biased stretch (basic and acidic residues) spans 915–930; sequence RKVEEGAEQGAEKADA. Residues 915–936 are disordered; that stretch reads RKVEEGAEQGAEKADAGEIVAA.

This sequence belongs to the GlnD family. The cofactor is Mg(2+).

The enzyme catalyses [protein-PII]-L-tyrosine + UTP = [protein-PII]-uridylyl-L-tyrosine + diphosphate. It carries out the reaction [protein-PII]-uridylyl-L-tyrosine + H2O = [protein-PII]-L-tyrosine + UMP + H(+). With respect to regulation, uridylyltransferase (UTase) activity is inhibited by glutamine, while glutamine activates uridylyl-removing (UR) activity. In terms of biological role, modifies, by uridylylation and deuridylylation, the PII regulatory proteins (GlnB and homologs), in response to the nitrogen status of the cell that GlnD senses through the glutamine level. Under low glutamine levels, catalyzes the conversion of the PII proteins and UTP to PII-UMP and PPi, while under higher glutamine levels, GlnD hydrolyzes PII-UMP to PII and UMP (deuridylylation). Thus, controls uridylylation state and activity of the PII proteins, and plays an important role in the regulation of nitrogen fixation and metabolism. This is Bifunctional uridylyltransferase/uridylyl-removing enzyme from Rhodospirillum rubrum (strain ATCC 11170 / ATH 1.1.1 / DSM 467 / LMG 4362 / NCIMB 8255 / S1).